The following is a 119-amino-acid chain: Holo-[acyl-carrier-protein] synthase (119 aa).

Residues D8 and E60 each coordinate Mg(2+).

Belongs to the P-Pant transferase superfamily. AcpS family. The cofactor is Mg(2+).

It localises to the cytoplasm. It catalyses the reaction apo-[ACP] + CoA = holo-[ACP] + adenosine 3',5'-bisphosphate + H(+). In terms of biological role, transfers the 4'-phosphopantetheine moiety from coenzyme A to a Ser of acyl-carrier-protein. This Mycoplasma pneumoniae (strain ATCC 29342 / M129 / Subtype 1) (Mycoplasmoides pneumoniae) protein is Holo-[acyl-carrier-protein] synthase.